The following is a 205-amino-acid chain: High frequency lysogenization protein HflD homolog (205 aa).

It belongs to the HflD family.

It is found in the cytoplasm. The protein localises to the cell inner membrane. This is High frequency lysogenization protein HflD homolog from Shewanella sp. (strain W3-18-1).